We begin with the raw amino-acid sequence, 447 residues long: GTPase Der (447 aa).

EngA-type G domains are found at residues 4–165 (KIIA…PEEE) and 180–357 (LQIV…KIWN). Residues 10–17 (GRPNVGKS), 57–61 (DTPGL), 119–122 (NKCE), 186–193 (GRPNAGKS), 233–237 (DTAGL), and 298–301 (NKWD) contribute to the GTP site. The KH-like domain maps to 358-443 (KKIATSKLNE…PIRFTYVKTK (86 aa)).

Belongs to the TRAFAC class TrmE-Era-EngA-EngB-Septin-like GTPase superfamily. EngA (Der) GTPase family. As to quaternary structure, associates with the 50S ribosomal subunit.

GTPase that plays an essential role in the late steps of ribosome biogenesis. The sequence is that of GTPase Der from Rickettsia akari (strain Hartford).